The primary structure comprises 121 residues: Large ribosomal subunit protein uL18 (121 aa).

Residues 1–25 (MKIVISKPDKNKIRQKRHRRVRGKL) are disordered. Residues 13–23 (IRQKRHRRVRG) show a composition bias toward basic residues.

Belongs to the universal ribosomal protein uL18 family. As to quaternary structure, part of the 50S ribosomal subunit; part of the 5S rRNA/L5/L18/L25 subcomplex. Contacts the 5S and 23S rRNAs.

Its function is as follows. This is one of the proteins that bind and probably mediate the attachment of the 5S RNA into the large ribosomal subunit, where it forms part of the central protuberance. The polypeptide is Large ribosomal subunit protein uL18 (Streptococcus pyogenes serotype M28 (strain MGAS6180)).